The sequence spans 282 residues: 2-dehydro-3-deoxyphosphooctonate aldolase (282 aa).

It belongs to the KdsA family.

The protein resides in the cytoplasm. The enzyme catalyses D-arabinose 5-phosphate + phosphoenolpyruvate + H2O = 3-deoxy-alpha-D-manno-2-octulosonate-8-phosphate + phosphate. It functions in the pathway carbohydrate biosynthesis; 3-deoxy-D-manno-octulosonate biosynthesis; 3-deoxy-D-manno-octulosonate from D-ribulose 5-phosphate: step 2/3. It participates in bacterial outer membrane biogenesis; lipopolysaccharide biosynthesis. This Shewanella pealeana (strain ATCC 700345 / ANG-SQ1) protein is 2-dehydro-3-deoxyphosphooctonate aldolase.